Here is a 340-residue protein sequence, read N- to C-terminus: Protein RecA (340 aa).

Glycine 65 to threonine 72 serves as a coordination point for ATP.

This sequence belongs to the RecA family.

It is found in the cytoplasm. Can catalyze the hydrolysis of ATP in the presence of single-stranded DNA, the ATP-dependent uptake of single-stranded DNA by duplex DNA, and the ATP-dependent hybridization of homologous single-stranded DNAs. It interacts with LexA causing its activation and leading to its autocatalytic cleavage. The chain is Protein RecA from Thermus thermophilus (strain ATCC 27634 / DSM 579 / HB8).